A 150-amino-acid polypeptide reads, in one-letter code: C-type lectin 16 (150 aa).

The N-terminal stretch at 1-27 (MKRVRVKVIFVSFGLLVVFLSLSGTAA) is a signal peptide. Cystine bridges form between Cys-29–Cys-40, Cys-57–Cys-146, and Cys-123–Cys-138. A C-type lectin domain is found at 36-147 (YEGHCYKPFN…CRMLARFVCE (112 aa)).

The protein belongs to the snaclec family. As to quaternary structure, heteromultimer; disulfide-linked. In terms of tissue distribution, expressed by the venom gland.

Its subcellular location is the secreted. Its function is as follows. Interferes with one step of hemostasis (modulation of platelet aggregation, or coagulation cascade, for example). The polypeptide is C-type lectin 16 (Crotalus adamanteus (Eastern diamondback rattlesnake)).